A 38-amino-acid chain; its full sequence is Photosystem II reaction center protein L (38 aa).

The helical transmembrane segment at 17-37 threads the bilayer; it reads SLYWGLLLIFVLAVPFSNYFF.

It belongs to the PsbL family. As to quaternary structure, PSII is composed of 1 copy each of membrane proteins PsbA, PsbB, PsbC, PsbD, PsbE, PsbF, PsbH, PsbI, PsbJ, PsbK, PsbL, PsbM, PsbT, PsbX, PsbY, PsbZ, Psb30/Ycf12, at least 3 peripheral proteins of the oxygen-evolving complex and a large number of cofactors. It forms dimeric complexes.

Its subcellular location is the plastid. The protein resides in the chloroplast thylakoid membrane. Its function is as follows. One of the components of the core complex of photosystem II (PSII). PSII is a light-driven water:plastoquinone oxidoreductase that uses light energy to abstract electrons from H(2)O, generating O(2) and a proton gradient subsequently used for ATP formation. It consists of a core antenna complex that captures photons, and an electron transfer chain that converts photonic excitation into a charge separation. This subunit is found at the monomer-monomer interface and is required for correct PSII assembly and/or dimerization. The chain is Photosystem II reaction center protein L from Cedrus deodara (Deodar cedar).